Reading from the N-terminus, the 347-residue chain is Photosystem II protein D1 (347 aa).

Transmembrane regions (helical) follow at residues Y31 to I48, H120 to F135, and W144 to A158. Residue H120 participates in chlorophyll a binding. W128 provides a ligand contact to pheophytin a. D172 and E191 together coordinate [CaMn4O5] cluster. A helical membrane pass occupies residues F199–L220. H200 serves as a coordination point for chlorophyll a. A quinone contacts are provided by residues H217 and S266–F267. H217 is a binding site for Fe cation. Fe cation is bound at residue H274. A helical transmembrane segment spans residues F276–L290. Positions 334, 335, and 344 each coordinate [CaMn4O5] cluster.

It belongs to the reaction center PufL/M/PsbA/D family. PSII is composed of 1 copy each of membrane proteins PsbA, PsbB, PsbC, PsbD, PsbE, PsbF, PsbH, PsbI, PsbJ, PsbK, PsbL, PsbM, PsbT, PsbX, PsbY, PsbZ, Psb30/Ycf12, at least 3 peripheral proteins of the oxygen-evolving complex and a large number of cofactors. It forms dimeric complexes. The D1/D2 heterodimer binds P680, chlorophylls that are the primary electron donor of PSII, and subsequent electron acceptors. It shares a non-heme iron and each subunit binds pheophytin, quinone, additional chlorophylls, carotenoids and lipids. D1 provides most of the ligands for the Mn4-Ca-O5 cluster of the oxygen-evolving complex (OEC). There is also a Cl(-1) ion associated with D1 and D2, which is required for oxygen evolution. The PSII complex binds additional chlorophylls, carotenoids and specific lipids. serves as cofactor. Post-translationally, tyr-163 forms a radical intermediate that is referred to as redox-active TyrZ, YZ or Y-Z.

The protein resides in the plastid. It is found in the chloroplast thylakoid membrane. The enzyme catalyses 2 a plastoquinone + 4 hnu + 2 H2O = 2 a plastoquinol + O2. In terms of biological role, photosystem II (PSII) is a light-driven water:plastoquinone oxidoreductase that uses light energy to abstract electrons from H(2)O, generating O(2) and a proton gradient subsequently used for ATP formation. It consists of a core antenna complex that captures photons, and an electron transfer chain that converts photonic excitation into a charge separation. The D1/D2 (PsbA/PsbD) reaction center heterodimer binds P680, the primary electron donor of PSII as well as several subsequent electron acceptors. The chain is Photosystem II protein D1 from Alexandrium tamarense (Red tide dinoflagellate).